Consider the following 424-residue polypeptide: 26S proteasome regulatory subunit 6A homolog A (424 aa).

The disordered stretch occupies residues 1 to 21 (MATPMVEDTSSFEEDQLASMS). A2 carries the post-translational modification N-acetylalanine. Residue S19 is modified to Phosphoserine. 212–219 (GPPGTGKT) is a binding site for ATP. K235 is covalently cross-linked (Glycyl lysine isopeptide (Lys-Gly) (interchain with G-Cter in ubiquitin)). O-acetylthreonine is present on T278. Glycyl lysine isopeptide (Lys-Gly) (interchain with G-Cter in ubiquitin) cross-links involve residues K279 and K416.

It belongs to the AAA ATPase family. As to quaternary structure, component of the 19S regulatory particle (RP/PA700) base subcomplex of the 26S proteasome. The 26S proteasome is composed of a core protease (CP), known as the 20S proteasome, capped at one or both ends by the 19S regulatory particle (RP/PA700). The RP/PA700 complex is composed of at least 17 different subunits in two subcomplexes, the base and the lid, which form the portions proximal and distal to the 20S proteolytic core, respectively. In terms of tissue distribution, ubiquitous.

Its subcellular location is the cytoplasm. It is found in the nucleus. In terms of biological role, the 26S proteasome is involved in the ATP-dependent degradation of ubiquitinated proteins. The regulatory (or ATPase) complex confers ATP dependency and substrate specificity to the 26S complex. Interacts with transit peptides of proteins targeted to the chloroplast, and may be involved in the degradation of unimported plastid protein precursors. Plays a essential role in the gametophyte development. Involved in tolerance to zinc deficiency, possibly through alleviation of oxidative stresses or processing of poly-ubiquitinated proteins. This chain is 26S proteasome regulatory subunit 6A homolog A, found in Arabidopsis thaliana (Mouse-ear cress).